We begin with the raw amino-acid sequence, 364 residues long: Probable mannose-1-phosphate guanylyltransferase 2 (364 aa).

2 residues coordinate GDP-alpha-D-mannose: L6 and V7. Diphosphate is bound by residues G9, G11, T12, R13, and K23. Residues G88, N112, D114, G149, and N176 each coordinate GDP-alpha-D-mannose.

This sequence belongs to the transferase hexapeptide repeat family.

The catalysed reaction is alpha-D-mannose 1-phosphate + GTP + H(+) = GDP-alpha-D-mannose + diphosphate. It functions in the pathway nucleotide-sugar biosynthesis; GDP-alpha-D-mannose biosynthesis; GDP-alpha-D-mannose from alpha-D-mannose 1-phosphate (GTP route): step 1/1. Its function is as follows. Catalyzes a reaction of the Smirnoff-Wheeler pathway, the major route to ascorbate biosynthesis in plants. The chain is Probable mannose-1-phosphate guanylyltransferase 2 from Arabidopsis thaliana (Mouse-ear cress).